Here is a 162-residue protein sequence, read N- to C-terminus: Shikimate kinase (162 aa).

11-16 is a binding site for ATP; the sequence is GSGKSS. Ser15 contacts Mg(2+). 3 residues coordinate substrate: Asp33, Arg57, and Gly80. Residue Arg116 participates in ATP binding. Arg132 is a binding site for substrate.

The protein belongs to the shikimate kinase family. As to quaternary structure, monomer. Mg(2+) is required as a cofactor.

It is found in the cytoplasm. The enzyme catalyses shikimate + ATP = 3-phosphoshikimate + ADP + H(+). The protein operates within metabolic intermediate biosynthesis; chorismate biosynthesis; chorismate from D-erythrose 4-phosphate and phosphoenolpyruvate: step 5/7. Its function is as follows. Catalyzes the specific phosphorylation of the 3-hydroxyl group of shikimic acid using ATP as a cosubstrate. In Helicobacter pylori (strain Shi470), this protein is Shikimate kinase.